Reading from the N-terminus, the 226-residue chain is MSKKGKKYIEAFSKVDKNKFYNIEDAILLLKEIKFAKFDETIDISINLNLKKNHTVRDTIVLPNQFMKPKRILVFAKGDRADEARAFGATHVGDDDLINKIKSGWDEFDVVVATPDMMKDVGRLGPILGKRGLMPNPKTQTVTNNLKDAINSLKKGRTEFRANKNGVISFSFGKSSMDNEKIKENYEEFVKEVVKKRPSDLKGAFIDSIYISSTMGPSIKVNFVWR.

This sequence belongs to the universal ribosomal protein uL1 family. As to quaternary structure, part of the 50S ribosomal subunit.

In terms of biological role, binds directly to 23S rRNA. The L1 stalk is quite mobile in the ribosome, and is involved in E site tRNA release. Functionally, protein L1 is also a translational repressor protein, it controls the translation of the L11 operon by binding to its mRNA. The sequence is that of Large ribosomal subunit protein uL1 from Borreliella burgdorferi (strain ZS7) (Borrelia burgdorferi).